The primary structure comprises 480 residues: Ammonium transporter 2 member 4 (480 aa).

Topologically, residues 1–27 (MELPSNLLPDEASPEWMNKGDNAWQLT) are extracellular. The helical transmembrane segment at 28–48 (AATMVGLQSIPGLVILYGSLV) threads the bilayer. The Cytoplasmic segment spans residues 49 to 51 (KKT). A helical membrane pass occupies residues 52 to 72 (WAINSAFMAFYAFASVLLCWV). Over 73-113 (SWAYQMSFGEKMVFFLGKPNVALDEKFLLGKAFLGNFPNAT) the chain is Extracellular. Asparagine 111 carries N-linked (GlcNAc...) asparagine glycosylation. A helical transmembrane segment spans residues 114–134 (MVFYQGVFAGLTLILIAGALL). The Cytoplasmic segment spans residues 135-141 (GRMNIRA). Residues 142-162 (WMLFVPLWVTFSYTVVAFSIW) traverse the membrane as a helical segment. Residues 163-175 (CPDGWLAKRGVID) are Extracellular-facing. A helical membrane pass occupies residues 176–196 (FAGGYVIHLSAGVAGFTAAYW). Topologically, residues 197–214 (VGPRADKDRETFPAATNN) are cytoplasmic. Residues 215–235 (MIMVLAGAGLLWMGWSGFNGG) form a helical membrane-spanning segment. At 236–242 (APFVAST) the chain is on the extracellular side. A helical transmembrane segment spans residues 243 to 263 (IASLAILNTHVCTAASITVWV). Over 264–274 (MLDTFYFGKPT) the chain is Cytoplasmic. A helical transmembrane segment spans residues 275-295 (VFGAVQGMITGLVCITPAAGV). The Extracellular portion of the chain corresponds to 296–298 (VQG). A helical membrane pass occupies residues 299–319 (WAAILMGFISGSIPWYTMMVL). Residues 320-334 (HNKVNFLKKIDDPMA) lie on the Cytoplasmic side of the membrane. A helical membrane pass occupies residues 335-355 (VFHTHAIAGALGGILTGFFAV). Residues 356 to 394 (PKLCRLFYMVPDWEKYIGLAYGLQNKGATQAGLKQMVIQ) lie on the Extracellular side of the membrane. The chain crosses the membrane as a helical span at residues 395–415 (IEAIVFVICYNVLMTSLICLI). Residues 416 to 480 (VRVIVPLRLN…SRSLGELQMV (65 aa)) are Cytoplasmic-facing.

The protein belongs to the ammonia transporter channel (TC 1.A.11.2) family.

It localises to the cell membrane. Involved in ammonium transport. May be involved in arbuscular mycorrhizal (AM) symbiosis with AM fungi. The protein is Ammonium transporter 2 member 4 of Medicago truncatula (Barrel medic).